Consider the following 1117-residue polypeptide: MGAPGLRAATAALGLLLCAGLGRAGPAGSGGHGAPGQLLDDDAQRPCPAACHCLGDLLDCSRRRLVRLPDPLPAWVTRLDLSHNRLSFIQTSSLSHLQSLQEVKLNNNELETIPNLGSISANIRQLSLAGNAIDKILPEQLEAFQSLETLDLSNNNISELRTAFPPLQLKYLYINNNRVSSMEPGYFDNLASTLLVLKLNRNRISAIPPKMFKLPQLQHLELNRNKIKNVDGLTFQGLGALKSLKMQRNGVTKLMDGAFWGLSNMEVLQLDHNNLTEITKGWLYGLLMLRELHLSQNAINRISPDAWEFCQKLSELDLTFNHLSRLDDSSFLGLSLLNALHIGNNKVSYIADCAFRGLTSLKTLDLRNNEISWTIEDMSGAFSGLDRLRQLILQGNRIRSITKKAFAGLDTLEHLDLSGNAIMSLQSNAFSQMKKLQQLHLNTSSLLCDCQLRWLPQWVAENNFQSFVNASCAHPQLLKGRSIFTVSPDGFVCDDFPKPQITVQPETQSAIKGSDVSFTCSAASSSDSPMTFAWKKDNEALQDAEMENYAHLRAQGGELMEYTTILRLRNVEFTSEGKYQCVISNHFGSSYSVKAKLTINMLPSFTKTPMDLTIRAGAMARLECAAVGHPAPQIAWQKDGGTDFPAARERRMHVMPEDDVFFIVDVKIEDIGVYSCTAQNSAGSVSANATLTVLETPSFLRPLLDRTVTKGETAVLQCIAGGSPPPRLNWTKDDSPLVVTERHFFAAGNQLLIIVDSDVSDAGKYTCEMSNTLGTERGNVRLSVIPTPTCDSPHMTAPSLDGDGWATVGVVIIAVVCCVVGTSLVWVVIIYHTRRRNEDCSITNTDETNLPADIPSYLSSQGTLADRQDGYISSESGSHHQFVTSSGGGFFLPQHDGAGTCHFDDSSEADVEAASDPFLCPFVGSTGPVYLQGNLYSPDPFEVYLPGCSSDPRTALMDHCESSYVKQDRFSCARPSEEPCERSLKSIPWPHSRKLTDSTYPPNEGHTVQTLCLNKSSVDFSTGPEPGSATSSNSFMGTFGKPLRRPHLDAFSSSAQPPDCQPRPCHGKSLSSPELDSESEENDKERTDFREENHRCTYQQIFHTYRTPDCQPCDSDT.

A signal peptide spans methionine 1–alanine 24. Residues leucine 38–alanine 74 enclose the LRRNT domain. LRR repeat units lie at residues tryptophan 75–glutamine 98, serine 99–serine 120, asparagine 122–alanine 143, serine 146–glutamine 168, leucine 169–asparagine 189, threonine 193–leucine 214, glutamine 216–glycine 237, alanine 240–glycine 261, asparagine 264–glycine 285, methionine 288–phenylalanine 309, lysine 312–glycine 333, leucine 336–glycine 357, serine 360–phenylalanine 382, arginine 387–glycine 408, and threonine 411–glutamine 432. N-linked (GlcNAc...) asparagine glycosylation occurs at asparagine 156. Asparagine 274 is a glycosylation site (N-linked (GlcNAc...) asparagine). 2 N-linked (GlcNAc...) asparagine glycosylation sites follow: asparagine 442 and asparagine 469. An LRRCT domain is found at serine 444–aspartate 495. Ig-like C2-type domains are found at residues proline 499 to threonine 598, proline 603 to threonine 692, and proline 697 to serine 783. 2 cysteine pairs are disulfide-bonded: cysteine 520–cysteine 581 and cysteine 624–cysteine 676. 2 N-linked (GlcNAc...) asparagine glycosylation sites follow: asparagine 688 and asparagine 729. An intrachain disulfide couples cysteine 718 to cysteine 767. Residues valine 810–isoleucine 830 traverse the membrane as a helical segment. Asparagine 1014 carries an N-linked (GlcNAc...) asparagine glycan. The disordered stretch occupies residues aspartate 1019–asparagine 1093. Residues aspartate 1083–asparagine 1093 are compositionally biased toward basic and acidic residues.

As to quaternary structure, interacts with EGFR, ERBB2 and ERBB4 (in vitro). As to expression, widely expressed.

It is found in the cell membrane. Its subcellular location is the cytoplasmic vesicle membrane. Plays a role in craniofacial and inner ear morphogenesis during embryonic development. Acts within the otic vesicle epithelium to control formation of the lateral semicircular canal in the inner ear, possibly by restricting the expression of NTN1. In Mus musculus (Mouse), this protein is Leucine-rich repeats and immunoglobulin-like domains protein 3 (Lrig3).